We begin with the raw amino-acid sequence, 199 residues long: MSLFALFYMLFAYLLGSVSSAILICRIAGLPDPRQNGSHNPGATNVLRIGNRKSALAVLIFDMLKGMIPVWAGYYLGLTQFELGMVALGACLGHIFPIFFQFKGGKGVATAFGAIAPISWAVAGSMFGTWIFVFLVSGYSSLSAVISALLVPFYVWWFKPEFTFPVALVCCLLIYRHHDNIQRLWRGQEDKVWAKFKKK.

Transmembrane regions (helical) follow at residues 4–24 (FALFYMLFAYLLGSVSSAILI), 56–76 (LAVLIFDMLKGMIPVWAGYYL), 80–100 (QFELGMVALGACLGHIFPIFF), 115–135 (IAPISWAVAGSMFGTWIFVFL), and 154–176 (YVWWFKPEFTFPVALVCCLLIYR).

This sequence belongs to the PlsY family. In terms of assembly, probably interacts with PlsX.

Its subcellular location is the cell inner membrane. The catalysed reaction is an acyl phosphate + sn-glycerol 3-phosphate = a 1-acyl-sn-glycero-3-phosphate + phosphate. It functions in the pathway lipid metabolism; phospholipid metabolism. In terms of biological role, catalyzes the transfer of an acyl group from acyl-phosphate (acyl-PO(4)) to glycerol-3-phosphate (G3P) to form lysophosphatidic acid (LPA). This enzyme utilizes acyl-phosphate as fatty acyl donor, but not acyl-CoA or acyl-ACP. The protein is Glycerol-3-phosphate acyltransferase of Haemophilus influenzae (strain PittEE).